Reading from the N-terminus, the 197-residue chain is Cyclin-dependent kinase inhibitor 1B (197 aa).

Polar residues predominate over residues 1 to 11 (MSNVRVSNGSP). The segment at 1–34 (MSNVRVSNGSPSLERMDARQAEHPKPSACRNLFG) is disordered. The residue at position 10 (Ser-10) is a Phosphoserine; by UHMK1. Basic and acidic residues predominate over residues 14–25 (ERMDARQAEHPK). Residues 51 to 91 (DMEEASQRKWNFDFQNHKPLEGRYEWQEVERGSLPEFYYRP) are interaction with CDK2. Tyr-74 is modified (phosphotyrosine; by SRC). The disordered stretch occupies residues 86–197 (EFYYRPPRPP…PKKPGLRRQT (112 aa)). Tyr-88 carries the post-translational modification Phosphotyrosine; by ABL, LYN, SRC and JAK2. At Tyr-89 the chain carries Phosphotyrosine. Polar residues predominate over residues 104-113 (QESQDVSGSR). A Nuclear localization signal motif is present at residues 153-169 (KRPAAEDSSSQNKRANR). Thr-170 carries the post-translational modification Phosphothreonine; by CaMK1. Residues 175-186 (SDGSPNAGTVEQ) show a composition bias toward polar residues. Thr-187 carries the post-translational modification Phosphothreonine; by PKB/AKT1, CDK1 and CDK2. A Phosphothreonine; by CaMK1, PKB/AKT1, RPS6KA1, RPS6KA3 and PIM1 modification is found at Thr-197.

It belongs to the CDI family. Forms a ternary complex composed of CCNE1, CDK2 and CDKN1B. Interacts directly with CCNE1; the interaction is inhibited by CDK2-dependent phosphorylation on Thr-187. Interacts with COPS5, subunit of the COP9 signalosome complex; the interaction leads to CDKN1B degradation. Interacts with NUP50; the interaction leads to nuclear import and degradation of phosphorylated CDKN1B. Interacts with CCND1 and SNX6. Interacts (Thr-197-phosphorylated form) with 14-3-3 proteins, binds strongly YWHAQ, weakly YWHAE and YWHAH, but not YWHAB nor YWHAZ; the interaction with YWHAQ results in translocation to the cytoplasm. Interacts with AKT1 and LYN; the interactions lead to cytoplasmic mislocation, phosphorylation of CDKN1B and inhibition of cell cycle arrest. Forms a ternary complex with CCNA2 and CDK2; CDKN1B inhibits the kinase activity of CDK2 through conformational rearrangements. Interacts (unphosphorylated form) with CDK2. Forms a complex with CDK2 and SPDYA, but does not directly interact with SPDYA. Forms a ternary complex composed of cyclin D, CDK4 and CDKN1B. Interacts (phosphorylated on Tyr-88 and Tyr-89) with CDK4; the interaction is required for cyclin D and CDK4 complex assembly, induces nuclear translocation and activates the CDK4 kinase activity. Interacts with GRB2. Interacts with PIM1. Identified in a complex with SKP1, SKP2 and CKS1B. Interacts with UHMK1; the interaction leads to cytoplasmic mislocation, phosphorylation of CDKN1B and inhibition of cell cycle arrest. Also interacts with CDK1. Dephosphorylated on Thr-187 by PPM1H, leading to CDKN1B stability. Post-translationally, phosphorylated; phosphorylation occurs on serine, threonine and tyrosine residues. Phosphorylation on Ser-10 is the major site of phosphorylation in resting cells, takes place at the G(0)-G(1) phase and leads to protein stability. Phosphorylation on other sites is greatly enhanced by mitogens, growth factors, MYC and in certain cancer cell lines. The phosphorylated form found in the cytoplasm is inactivate. Phosphorylation on Thr-197 is required for interaction with 14-3-3 proteins. Phosphorylation on Thr-187, by CDK1 and CDK2 leads to protein ubiquitination and proteasomal degradation. Tyrosine phosphorylation promotes this process. Phosphorylation by PKB/AKT1 can be suppressed by LY294002, an inhibitor of the catalytic subunit of PI3K. Phosphorylation on Tyr-88 and Tyr-89 has no effect on binding CDK2, but is required for binding CDK4. Dephosphorylated on tyrosine residues by G-CSF. Dephosphorylated on Thr-187 by PPM1H, leading to CDKN1B stability. Ubiquitinated; in the cytoplasm by the KPC complex (composed of RNF123/KPC1 and UBAC1/KPC2) and, in the nucleus, by SCF(SKP2). The latter requires prior phosphorylation on Thr-187. Ubiquitinated; by a TRIM21-containing SCF(SKP2)-like complex; leads to its degradation. In terms of processing, subject to degradation in the lysosome. Interaction with SNX6 promotes lysosomal degradation.

It is found in the nucleus. It localises to the cytoplasm. The protein resides in the endosome. Important regulator of cell cycle progression. Inhibits the kinase activity of CDK2 bound to cyclin A, but has little inhibitory activity on CDK2 bound to SPDYA. Involved in G1 arrest. Potent inhibitor of cyclin E- and cyclin A-CDK2 complexes. Forms a complex with cyclin type D-CDK4 complexes and is involved in the assembly, stability, and modulation of CCND1-CDK4 complex activation. Acts either as an inhibitor or an activator of cyclin type D-CDK4 complexes depending on its phosphorylation state and/or stoichometry. The chain is Cyclin-dependent kinase inhibitor 1B (Cdkn1b) from Mus musculus (Mouse).